The primary structure comprises 154 residues: MKRCLNKANMTTSVKIVNKSNNALPAYQTAQAAGMDLSAYITEAIVLQPLQRQLVPTGLFIELPEHTEAQIRPRSGLAFKHGITVLNSPGTIDADYRGEIKVLLVNLSNEAFTIQSGERIAQIVIAKVEHAHFVEVEELSDSLRAAAGFGSTGK.

Substrate-binding positions include 74 to 76, Asn87, 91 to 93, and Lys101; these read RSG and TID.

This sequence belongs to the dUTPase family. Requires Mg(2+) as cofactor.

The enzyme catalyses dUTP + H2O = dUMP + diphosphate + H(+). It participates in pyrimidine metabolism; dUMP biosynthesis; dUMP from dCTP (dUTP route): step 2/2. Functionally, this enzyme is involved in nucleotide metabolism: it produces dUMP, the immediate precursor of thymidine nucleotides and it decreases the intracellular concentration of dUTP so that uracil cannot be incorporated into DNA. This is Deoxyuridine 5'-triphosphate nucleotidohydrolase from Cytophaga hutchinsonii (strain ATCC 33406 / DSM 1761 / CIP 103989 / NBRC 15051 / NCIMB 9469 / D465).